A 292-amino-acid polypeptide reads, in one-letter code: Bifunctional protein FolD (292 aa).

Residues Gly166 to Ser168, Ser191, and Ile232 each bind NADP(+).

It belongs to the tetrahydrofolate dehydrogenase/cyclohydrolase family. In terms of assembly, homodimer.

It carries out the reaction (6R)-5,10-methylene-5,6,7,8-tetrahydrofolate + NADP(+) = (6R)-5,10-methenyltetrahydrofolate + NADPH. It catalyses the reaction (6R)-5,10-methenyltetrahydrofolate + H2O = (6R)-10-formyltetrahydrofolate + H(+). It participates in one-carbon metabolism; tetrahydrofolate interconversion. Functionally, catalyzes the oxidation of 5,10-methylenetetrahydrofolate to 5,10-methenyltetrahydrofolate and then the hydrolysis of 5,10-methenyltetrahydrofolate to 10-formyltetrahydrofolate. The sequence is that of Bifunctional protein FolD from Synechococcus sp. (strain RCC307).